The sequence spans 295 residues: Indole-3-glycerol phosphate synthase (295 aa).

Belongs to the TrpC family.

It catalyses the reaction 1-(2-carboxyphenylamino)-1-deoxy-D-ribulose 5-phosphate + H(+) = (1S,2R)-1-C-(indol-3-yl)glycerol 3-phosphate + CO2 + H2O. Its pathway is amino-acid biosynthesis; L-tryptophan biosynthesis; L-tryptophan from chorismate: step 4/5. The protein is Indole-3-glycerol phosphate synthase of Prochlorococcus marinus (strain AS9601).